The chain runs to 309 residues: Protein FdhE homolog (309 aa).

It belongs to the FdhE family.

Its subcellular location is the cytoplasm. Necessary for formate dehydrogenase activity. The chain is Protein FdhE homolog from Cronobacter sakazakii (strain ATCC BAA-894) (Enterobacter sakazakii).